The chain runs to 254 residues: Photosystem II 22 kDa protein 2, chloroplastic (254 aa).

The N-terminal 38 residues, 1–38 (MALQQSMAMPMMVVSGLGTAPRSSPMVQLQRMKKHLVV), are a transit peptide targeting the chloroplast. A run of 2 repeats spans residues 42 to 148 (FKSR…FVDD) and 149 to 253 (ATGL…DNDD). 4 helical membrane-spanning segments follow: residues 86-106 (VAML…KGIL), 120-140 (AEPL…GALG), 184-204 (LFVG…EIIT), and 219-239 (PINE…FAAI).

The protein belongs to the ELIP/psbS family.

Its subcellular location is the plastid. It localises to the chloroplast thylakoid membrane. Functionally, involved in high light-mediated energy-dependent nonphotochemical quenching (NPQ, qE) and thermal dissipation (TD) thus regulating energy conversion in photosystem II and protecting from photoinhibition. Also seems to regulate quantum yield of electron transport in fluctuating light conditions. This Oryza sativa subsp. indica (Rice) protein is Photosystem II 22 kDa protein 2, chloroplastic.